We begin with the raw amino-acid sequence, 230 residues long: Cytochrome c oxidase subunit 2 (230 aa).

Residues 1–14 (MAHPTQLGFQDAAS) lie on the Mitochondrial intermembrane side of the membrane. Residues 15–45 (PVMEELLHFHDHALMIVFLISALVLYVIITT) traverse the membrane as a helical segment. The Mitochondrial matrix segment spans residues 46 to 59 (VSTKLTNMYILDSQ). Residues 60–87 (EIEIVWTVLPALILILIALPSLRILYLM) form a helical membrane-spanning segment. Residues 88-230 (DEINDPHLTI…NWSTLMLKDA (143 aa)) lie on the Mitochondrial intermembrane side of the membrane. Cu cation-binding residues include His-161, Cys-196, Glu-198, Cys-200, His-204, and Met-207. Glu-198 is a binding site for Mg(2+).

Belongs to the cytochrome c oxidase subunit 2 family. Component of the cytochrome c oxidase (complex IV, CIV), a multisubunit enzyme composed of 14 subunits. The complex is composed of a catalytic core of 3 subunits MT-CO1, MT-CO2 and MT-CO3, encoded in the mitochondrial DNA, and 11 supernumerary subunits COX4I, COX5A, COX5B, COX6A, COX6B, COX6C, COX7A, COX7B, COX7C, COX8 and NDUFA4, which are encoded in the nuclear genome. The complex exists as a monomer or a dimer and forms supercomplexes (SCs) in the inner mitochondrial membrane with NADH-ubiquinone oxidoreductase (complex I, CI) and ubiquinol-cytochrome c oxidoreductase (cytochrome b-c1 complex, complex III, CIII), resulting in different assemblies (supercomplex SCI(1)III(2)IV(1) and megacomplex MCI(2)III(2)IV(2)). Found in a complex with TMEM177, COA6, COX18, COX20, SCO1 and SCO2. Interacts with TMEM177 in a COX20-dependent manner. Interacts with COX20. Interacts with COX16. The cofactor is Cu cation.

Its subcellular location is the mitochondrion inner membrane. The enzyme catalyses 4 Fe(II)-[cytochrome c] + O2 + 8 H(+)(in) = 4 Fe(III)-[cytochrome c] + 2 H2O + 4 H(+)(out). Component of the cytochrome c oxidase, the last enzyme in the mitochondrial electron transport chain which drives oxidative phosphorylation. The respiratory chain contains 3 multisubunit complexes succinate dehydrogenase (complex II, CII), ubiquinol-cytochrome c oxidoreductase (cytochrome b-c1 complex, complex III, CIII) and cytochrome c oxidase (complex IV, CIV), that cooperate to transfer electrons derived from NADH and succinate to molecular oxygen, creating an electrochemical gradient over the inner membrane that drives transmembrane transport and the ATP synthase. Cytochrome c oxidase is the component of the respiratory chain that catalyzes the reduction of oxygen to water. Electrons originating from reduced cytochrome c in the intermembrane space (IMS) are transferred via the dinuclear copper A center (CU(A)) of subunit 2 and heme A of subunit 1 to the active site in subunit 1, a binuclear center (BNC) formed by heme A3 and copper B (CU(B)). The BNC reduces molecular oxygen to 2 water molecules using 4 electrons from cytochrome c in the IMS and 4 protons from the mitochondrial matrix. The protein is Cytochrome c oxidase subunit 2 (mt-co2) of Formosania lacustris (Oriental stream loach).